The following is a 281-amino-acid chain: Gas vesicle protein L1 (281 aa).

The protein belongs to the gas vesicle GvpF/GvpL family. In terms of assembly, may form oligomers. GvpF to GvpM interact with each other in vitro, and may form multi-subunit complex(es). Interacts with GvpC1, GvpN1 and GvpO1.

Its subcellular location is the gas vesicle. It localises to the cytoplasm. In terms of biological role, proteins GvpF to GvpM might be involved in nucleating gas vesicle formation. A minor component of the gas vesicle. This the only minor gas vesicle protein that binds all the others (including GvpC1, GvpN1 and GvpO1, but not GvpA1), suggesting it might be able to assemble them. Gas vesicles are hollow, gas filled proteinaceous nanostructures found in several microbial planktonic microorganisms. They allow positioning of halobacteria at the optimal depth for growth in the poorly aerated, shallow brine pools of their habitat. Its function is as follows. Expression of a 9.5 kb p-vac DNA fragment containing 2 divergently transcribed regions (gvpD-gvpE-gvpF-gvpG-gvpH-gvpI-gvpJ-gvpK-gvpL-gvpM and gvpA-gvpC-gvpN-gvpO) allows H.volcanii to produce gas vesicles. A minimal gas vesicle can be made in H.volcanii by gvpA1-gvpO1 plus gvpF1-gvpG1-gvpJ1-gvpK1-gvpL1-gvpM1; lack of enough GvpJ1 prevents their formation. A similar region restores gas vesicle production in H.halobium without the p-vac locus, but it still has the c-vac locus. This is Gas vesicle protein L1 (gvpL11) from Halobacterium salinarum (strain ATCC 700922 / JCM 11081 / NRC-1) (Halobacterium halobium).